The chain runs to 456 residues: Glycerol-3-phosphate acyltransferase 4 (456 aa).

Positions 1–37 (MFLLLPFDSLIVNLLGISLTVLFTLLLVFIIVPAIFG) are cleaved as a signal peptide. 2 helical membrane passes run 156–176 (ISLR…CFLL) and 180–200 (IALA…VGYL). A glycan (N-linked (GlcNAc...) asparagine) is linked at Asn-247. Positions 248 to 253 (HTSPID) match the HXXXXD motif motif. Residues Asn-327, Asn-328, and Asn-362 are each glycosylated (N-linked (GlcNAc...) asparagine).

This sequence belongs to the 1-acyl-sn-glycerol-3-phosphate acyltransferase family. As to expression, highly expressed in testis.

It localises to the endoplasmic reticulum membrane. The enzyme catalyses sn-glycerol 3-phosphate + an acyl-CoA = a 1-acyl-sn-glycero-3-phosphate + CoA. The catalysed reaction is dodecanoyl-CoA + sn-glycerol 3-phosphate = 1-dodecanoyl-sn-glycerol 3-phosphate + CoA. It catalyses the reaction sn-glycerol 3-phosphate + hexadecanoyl-CoA = 1-hexadecanoyl-sn-glycero-3-phosphate + CoA. It carries out the reaction sn-glycerol 3-phosphate + octadecanoyl-CoA = 1-octadecanoyl-sn-glycero-3-phosphate + CoA. The enzyme catalyses sn-glycerol 3-phosphate + (9Z)-octadecenoyl-CoA = 1-(9Z-octadecenoyl)-sn-glycero-3-phosphate + CoA. The catalysed reaction is (9Z,12Z)-octadecadienoyl-CoA + sn-glycerol 3-phosphate = 1-(9Z,12Z)-octadecadienoyl-sn-glycero-3-phosphate + CoA. The protein operates within phospholipid metabolism; CDP-diacylglycerol biosynthesis; CDP-diacylglycerol from sn-glycerol 3-phosphate: step 1/3. Functionally, converts glycerol-3-phosphate to 1-acyl-sn-glycerol-3-phosphate (lysophosphatidic acid or LPA) by incorporating an acyl moiety at the sn-1 position of the glycerol backbone. Active against both saturated and unsaturated long-chain fatty acyl-CoAs. Protects cells against lipotoxicity. This chain is Glycerol-3-phosphate acyltransferase 4, found in Mus musculus (Mouse).